Reading from the N-terminus, the 167-residue chain is Small ribosomal subunit protein uS5 (167 aa).

Residues 11–74 (LQEKLIAVNR…EKARRAMINV (64 aa)) form the S5 DRBM domain.

The protein belongs to the universal ribosomal protein uS5 family. Part of the 30S ribosomal subunit. Contacts proteins S4 and S8.

In terms of biological role, with S4 and S12 plays an important role in translational accuracy. Located at the back of the 30S subunit body where it stabilizes the conformation of the head with respect to the body. This Yersinia enterocolitica serotype O:8 / biotype 1B (strain NCTC 13174 / 8081) protein is Small ribosomal subunit protein uS5.